The primary structure comprises 395 residues: S-adenosylmethionine synthase (395 aa).

Position 16 (His16) interacts with ATP. Residue Asp18 participates in Mg(2+) binding. Glu44 provides a ligand contact to K(+). Residues Glu57 and Gln100 each contribute to the L-methionine site. The flexible loop stretch occupies residues 100 to 110 (QSPDIAQGVDR). ATP contacts are provided by residues 167–169 (DAK), 233–234 (RF), Asp242, 248–249 (RK), Ala265, and Lys269. An L-methionine-binding site is contributed by Asp242. Residue Lys273 participates in L-methionine binding.

The protein belongs to the AdoMet synthase family. In terms of assembly, homotetramer; dimer of dimers. Mg(2+) serves as cofactor. It depends on K(+) as a cofactor.

It is found in the cytoplasm. The enzyme catalyses L-methionine + ATP + H2O = S-adenosyl-L-methionine + phosphate + diphosphate. Its pathway is amino-acid biosynthesis; S-adenosyl-L-methionine biosynthesis; S-adenosyl-L-methionine from L-methionine: step 1/1. Its function is as follows. Catalyzes the formation of S-adenosylmethionine (AdoMet) from methionine and ATP. The overall synthetic reaction is composed of two sequential steps, AdoMet formation and the subsequent tripolyphosphate hydrolysis which occurs prior to release of AdoMet from the enzyme. The polypeptide is S-adenosylmethionine synthase (Burkholderia mallei (strain NCTC 10247)).